A 102-amino-acid polypeptide reads, in one-letter code: Spexin prohormone 1 (102 aa).

A signal peptide spans 1–26 (MKDLRTLAAYALALLLLATFVSYSRS). Residues 27–35 (APMGSFQRR) constitute a propeptide that is removed on maturation. Glutamine 49 is modified (glutamine amide). The propeptide occupies 50–102 (GRRFVSEDRNEGDLYDTIRLESQSQNTENLSISKAAAFLLNVLQQARDEGEPY).

Belongs to the spexin family. In terms of tissue distribution, expressed in the anterior hypothalamus, ventromedial thalamic nucleus and medial longitudinal fasciculus of the brain (at protein level). Widely expressed. Expressed predominantly in the spleen, kidney, liver and testis. Expressed in olfactory bulb, pituitary, telencephalon, diencephalons, spinal cord, optic tectum, cerebellum and hypothalamus of the brain.

The protein localises to the secreted. It is found in the extracellular space. The protein resides in the cytoplasmic vesicle. Its subcellular location is the secretory vesicle. Its function is as follows. Plays a role in the regulation of food intake and body weight and in reproduction. May also play a role as a central modulator of cardiovascular and renal function and nociception. Brain administration of the peptide inhibits food consumption. May function as a satiety factor for feeding control. Involved in the negative regulation of the reproductive axis by inhibiting luteinizing hormone secretion from pituitary cells. In Carassius auratus (Goldfish), this protein is Spexin prohormone 1 (spx).